The chain runs to 401 residues: Acetate kinase (401 aa).

Residue Asn7 participates in Mg(2+) binding. Lys14 provides a ligand contact to ATP. A substrate-binding site is contributed by Arg91. The active-site Proton donor/acceptor is Asp148. Residues 208–212 (HLGNG), 283–285 (DFR), and 332–336 (GVGEN) each bind ATP. Glu385 serves as a coordination point for Mg(2+).

Belongs to the acetokinase family. As to quaternary structure, homodimer. Mg(2+) is required as a cofactor. The cofactor is Mn(2+).

The protein localises to the cytoplasm. The enzyme catalyses acetate + ATP = acetyl phosphate + ADP. It participates in metabolic intermediate biosynthesis; acetyl-CoA biosynthesis; acetyl-CoA from acetate: step 1/2. Catalyzes the formation of acetyl phosphate from acetate and ATP. Can also catalyze the reverse reaction. This is Acetate kinase from Caldanaerobacter subterraneus subsp. tengcongensis (strain DSM 15242 / JCM 11007 / NBRC 100824 / MB4) (Thermoanaerobacter tengcongensis).